Reading from the N-terminus, the 375-residue chain is Alcohol dehydrogenase 1C (375 aa).

At Ser2 the chain carries N-acetylserine. Ser23 is subject to Phosphoserine. The Zn(2+) site is built by Cys47, His68, Cys98, Cys101, Cys104, Cys112, and Cys175. Residues 200–205, Asp224, Lys229, Ile270, 293–295, 318–320, and Arg370 contribute to the NAD(+) site; these read GLGGVG, VGV, and AIF.

It belongs to the zinc-containing alcohol dehydrogenase family. In terms of assembly, dimer of identical or non-identical chains of class I alcohol dehydrogenase: ADH1A, ADH1B, and ADH1C. Requires Zn(2+) as cofactor.

Its subcellular location is the cytoplasm. It carries out the reaction a primary alcohol + NAD(+) = an aldehyde + NADH + H(+). The catalysed reaction is ethanol + NAD(+) = acetaldehyde + NADH + H(+). Its function is as follows. Alcohol dehydrogenase. Exhibits high activity for ethanol oxidation and plays a major role in ethanol catabolism. This Homo sapiens (Human) protein is Alcohol dehydrogenase 1C (ADH1C).